A 367-amino-acid polypeptide reads, in one-letter code: 2-aminoethylphosphonate--pyruvate transaminase (367 aa).

N6-(pyridoxal phosphate)lysine is present on lysine 193.

This sequence belongs to the class-V pyridoxal-phosphate-dependent aminotransferase family. PhnW subfamily. In terms of assembly, homodimer. Requires pyridoxal 5'-phosphate as cofactor.

It carries out the reaction (2-aminoethyl)phosphonate + pyruvate = phosphonoacetaldehyde + L-alanine. Functionally, involved in phosphonate degradation. This Vibrio vulnificus (strain YJ016) protein is 2-aminoethylphosphonate--pyruvate transaminase.